Here is a 464-residue protein sequence, read N- to C-terminus: Cyclic 2,3-diphosphoglycerate synthetase (464 aa).

It belongs to the cyclic 2,3-diphosphoglycerate synthetase family.

The protein resides in the cytoplasm. The enzyme catalyses (2R)-2,3-bisphosphoglycerate + ATP + H(+) = cyclic (2R)-2,3-bisphosphoglycerate + ADP + phosphate. Activity decreases in response to phosphate limitation. Its function is as follows. Catalyzes the formation of cyclic 2,3-diphosphoglycerate (cDPG) by formation of an intramolecular phosphoanhydride bond at the expense of ATP. Not able to catalyze cDPG hydrolysis. May be involved in osmotic balance. The sequence is that of Cyclic 2,3-diphosphoglycerate synthetase (cpgS) from Methanothermobacter thermautotrophicus (strain ATCC 29096 / DSM 1053 / JCM 10044 / NBRC 100330 / Delta H) (Methanobacterium thermoautotrophicum).